Reading from the N-terminus, the 608-residue chain is Protein Spindly (608 aa).

Methionine 1 is modified (N-acetylmethionine). The stretch at 1–445 (MEADITNLRN…LKLKYEPEER (445 aa)) forms a coiled coil. The interval 465-487 (PEETEETAAASATEDGVSRLPPH) is disordered. Phosphoserine occurs at positions 516, 518, and 558.

The protein belongs to the Spindly family. As to quaternary structure, interacts with KNTC1 and ZW10. These interactions appear weak and may be transient or indirect. Interacts with dynein intermediate chain and dynactin (DCTN1). Interacts with the catalytically active form of USP45. Post-translationally, monoubiquitinated with'Lys-48' linkage. Deubiquitinated by USP45.

Its subcellular location is the cytoplasm. It is found in the cytoskeleton. The protein localises to the microtubule organizing center. It localises to the centrosome. The protein resides in the chromosome. Its subcellular location is the centromere. It is found in the kinetochore. The protein localises to the nucleus. It localises to the spindle pole. Functionally, required for the localization of dynein and dynactin to the mitotic kintochore. Dynein is believed to control the initial lateral interaction between the kinetochore and spindle microtubules and to facilitate the subsequent formation of end-on kinetochore-microtubule attachments mediated by the NDC80 complex. Also required for correct spindle orientation. Does not appear to be required for the removal of spindle assembly checkpoint (SAC) proteins from the kinetochore upon bipolar spindle attachment. Acts as an adapter protein linking the dynein motor complex to various cargos and converts dynein from a non-processive to a highly processive motor in the presence of dynactin. Facilitates the interaction between dynein and dynactin and activates dynein processivity (the ability to move along a microtubule for a long distance without falling off the track). Plays a role in cell migration. The sequence is that of Protein Spindly (Spdl1) from Mus musculus (Mouse).